Here is an 896-residue protein sequence, read N- to C-terminus: DNA double-strand break repair Rad50 ATPase (896 aa).

ATP is bound by residues 32 to 38 (NGAGKSS) and Q137. Coiled coils occupy residues 200-274 (RRYQ…KLQE), 412-505 (EEIR…LISM), 580-611 (IGDI…ESEF), 636-669 (IKLA…IQKR), and 702-731 (RSKV…RMKK). Residues 411–507 (YEEIRRDIDE…KKRQLISMES (97 aa)) form the Zinc-hook domain. Zn(2+)-binding residues include C455 and C458.

This sequence belongs to the SMC family. RAD50 subfamily. As to quaternary structure, homodimer. Forms a heterotetramer composed of two Mre11 subunits and two Rad50 subunits. It depends on Zn(2+) as a cofactor.

Functionally, part of the Rad50/Mre11 complex, which is involved in the early steps of DNA double-strand break (DSB) repair. The complex may facilitate opening of the processed DNA ends to aid in the recruitment of HerA and NurA. Rad50 controls the balance between DNA end bridging and DNA resection via ATP-dependent structural rearrangements of the Rad50/Mre11 complex. The sequence is that of DNA double-strand break repair Rad50 ATPase from Thermoplasma acidophilum (strain ATCC 25905 / DSM 1728 / JCM 9062 / NBRC 15155 / AMRC-C165).